Here is a 245-residue protein sequence, read N- to C-terminus: MANEAYPCPCDIGHRLEYGGLGREVQVEHIKAYVTKSPVDAGKAVIVIQDIFGWQLPNTRYMADMISGNGYTTIVPDFFVGQEPWDPSGDWSIFPEWLKTRNAQKIDREISAILKYLKQQCHAQKIGIVGFCWGGIAVHHLMMKYSEFRAGVSVYGIVKDSEDIYNLKNPTLFIFAENDVVIPLKDVSLLTQKLKEHCKVEYQIKTFSGQTHGFVHRKREDCSPADKPYIDEARRNLIEWLNKYM.

Position 2 is an N-acetylalanine (Ala2). Lys36 carries the N6-acetyllysine modification. Catalysis depends on residues Cys132, Asp179, and His212. Residue Ser223 is modified to Phosphoserine.

The protein belongs to the dienelactone hydrolase family.

It localises to the cytoplasm. The protein localises to the cytosol. Functionally, cysteine hydrolase. The protein is Carboxymethylenebutenolidase homolog (CMBL) of Pongo abelii (Sumatran orangutan).